Reading from the N-terminus, the 259-residue chain is Thiamine thiazole synthase (259 aa).

Residues A33, E52–R53, G60, V124, and H152–D154 contribute to the NAD(+) site. Residues D154 and H169 each contribute to the Fe cation site. M219 contacts NAD(+). R229 is a glycine binding site.

The protein belongs to the THI4 family. In terms of assembly, homooctamer; tetramer of dimers. Fe(2+) serves as cofactor.

It catalyses the reaction hydrogen sulfide + glycine + NAD(+) = ADP-5-ethyl-4-methylthiazole-2-carboxylate + nicotinamide + 3 H2O + H(+). The protein operates within cofactor biosynthesis; thiamine diphosphate biosynthesis. In terms of biological role, involved in the biosynthesis of the thiazole moiety of thiamine. Catalyzes the conversion of NAD and glycine to adenosine diphosphate 5-(2-hydroxyethyl)-4-methylthiazole-2-carboxylate (ADT), an adenylated thiazole intermediate, using free sulfide as a source of sulfur. This Pyrobaculum neutrophilum (strain DSM 2338 / JCM 9278 / NBRC 100436 / V24Sta) (Thermoproteus neutrophilus) protein is Thiamine thiazole synthase.